The sequence spans 667 residues: Beta-galactosidase LacA (667 aa).

Arginine 109 is a binding site for substrate. Cysteine 113 lines the Zn(2+) pocket. Position 147 (asparagine 147) interacts with substrate. Glutamate 148 acts as the Proton donor in catalysis. Residues cysteine 153, cysteine 155, and cysteine 158 each coordinate Zn(2+). Glutamate 307 (nucleophile) is an active-site residue. Substrate-binding positions include tryptophan 315 and 355–358 (EKFH).

This sequence belongs to the glycosyl hydrolase 42 family.

It carries out the reaction Hydrolysis of terminal non-reducing beta-D-galactose residues in beta-D-galactosides.. Functionally, hydrolyzes lactose, oNP-galactoside (oNPG), pNP-galactosidase (pNPG), pNP-mannoside, pNP-glucoside, pNP-fucoside, pNP-N-acetylglucosamide, but not pNP-arabinoside or 4-methylumbelliferyl-beta-galactopyranoside (MUG). Transgalactosylates lactose at 10 g/L, but not at 270 g/L. In Lactobacillus acidophilus, this protein is Beta-galactosidase LacA.